The sequence spans 149 residues: Large ribosomal subunit protein bL9 (149 aa).

This sequence belongs to the bacterial ribosomal protein bL9 family.

Binds to the 23S rRNA. This is Large ribosomal subunit protein bL9 from Syntrophus aciditrophicus (strain SB).